Consider the following 383-residue polypeptide: Protein phosphatase 2C homolog 4 (383 aa).

Residues 51-356 (SLGLCTARGD…DDITCLVVRL (306 aa)) enclose the PPM-type phosphatase domain. 3 residues coordinate Mn(2+): aspartate 92, aspartate 308, and aspartate 347.

This sequence belongs to the PP2C family. As to quaternary structure, monomer. Mg(2+) serves as cofactor. The cofactor is Mn(2+).

Its subcellular location is the vacuole membrane. It catalyses the reaction O-phospho-L-seryl-[protein] + H2O = L-seryl-[protein] + phosphate. It carries out the reaction O-phospho-L-threonyl-[protein] + H2O = L-threonyl-[protein] + phosphate. Its function is as follows. Has a role in the regulation of vacuole fusion. This Schizosaccharomyces pombe (strain 972 / ATCC 24843) (Fission yeast) protein is Protein phosphatase 2C homolog 4 (ptc4).